We begin with the raw amino-acid sequence, 154 residues long: Protein aau3 (154 aa).

Residues arginine 2–lysine 132 enclose the HTH rrf2-type domain. Residues cysteine 91, cysteine 99, and cysteine 105 each coordinate [2Fe-2S] cluster.

[2Fe-2S] cluster is required as a cofactor.

Functionally, required for growth utilizing PHB cycle intermediates. In Rhizobium meliloti (strain 1021) (Ensifer meliloti), this protein is Protein aau3 (aau3).